The sequence spans 293 residues: Actin-related protein 2/3 complex subunit 2 (293 aa).

This sequence belongs to the ARPC2 family. Component of the Arp2/3 complex composed of arpB/Arp2, arpC/Arp3, arcA/p41-arc, arcB/p34-arc, arcC/p21-arc, arcD/p20-arc and arcE/p16-arc. Interacts with carmil (via the region between the LRR domain and COOH-terminal proline-rich domain); carmil is required for Arp2/3-dependent actin nucleation. Arp2/3 complex, MyoB, MyoC, and the alpha and beta subunits of capping protein all form a larger complex with carmil.

The protein localises to the cytoplasm. It localises to the cytoskeleton. The protein resides in the cell projection. It is found in the cytosol. Its subcellular location is the cell cortex. The protein localises to the pseudopodium. In terms of biological role, functions as a component of the Arp2/3 complex which is involved in regulation of actin polymerization and together with an activating nucleation-promoting factor (NPF) mediates the formation of branched actin networks. Seems to contact the pointed end of the daughter actin filament. The Arp2/3 complex is involved in organizing the actin system in cell motility and chemotaxis, in phagocytosis and macropinocytosis, at late steps of endosome processing, and in mitosis. In concert with a group of other proteins, the Arp2/3 complex plays a general role in the rapid activation and adaptation of the actin system to its multiple functions. This is Actin-related protein 2/3 complex subunit 2 (arcB) from Dictyostelium discoideum (Social amoeba).